We begin with the raw amino-acid sequence, 546 residues long: Peptidoglycan transport ATP-binding protein YejF (546 aa).

2 consecutive ABC transporter domains span residues 12 to 261 (VRDL…RHLL) and 291 to 530 (IKAG…KALL). ATP contacts are provided by residues 46 to 53 (GESGSGKS) and 323 to 330 (GESGSGKT).

The protein belongs to the ABC transporter superfamily. As to quaternary structure, the complex is composed of one ATP-binding protein (YejF), two transmembrane proteins (YejB and YejE) and a solute-binding protein (YepA or YejA).

It localises to the cell inner membrane. Its function is as follows. Part of the ABC transporter complex YejBEF-YepA involved in the uptake of muropeptides, the breakdown products of cell wall peptidoglycan. The import of muropeptides into the cell enables peptidoglycan recycling, which is vital for cell wall integrity in this bacterium. Is also probably part of the ABC transporter complex YejABEF, which is likely involved in broad-spectrum peptide import. Responsible for energy coupling to the transport system. This is Peptidoglycan transport ATP-binding protein YejF from Agrobacterium fabrum (strain C58 / ATCC 33970) (Agrobacterium tumefaciens (strain C58)).